We begin with the raw amino-acid sequence, 290 residues long: MEWSLTQNKLLAFHRLMRTDKPIGALLLLWPTLWALWVATPGVPQLWIMAVFVAGVWLMRAAGCVVNDYADRKFDGHVKRTANRPLPSGAVTEKEARALFVVLVLISFLLVLTLNTMTILLSIAALALAWVYPFMKRYTHLPQVVLGAAFGWSIPMAFAAVSESVPLSCWLMFLANILWAVAYDTQYAMVDRDDDVKIGIKSTAILFGQYDKLIIGILQIGVLALMAIIGELNGLGWGYYWSIVVAGALFVYQQKLIANREREACFKAFMNNNYVGLVLFLGLAMSYWHF.

The next 8 membrane-spanning stretches (helical) occupy residues 23 to 43, 46 to 66, 99 to 119, 141 to 161, 163 to 183, 213 to 233, 234 to 254, and 268 to 288; these read IGALLLLWPTLWALWVATPGV, LWIMAVFVAGVWLMRAAGCVV, LFVVLVLISFLLVLTLNTMTI, LPQVVLGAAFGWSIPMAFAAV, ESVPLSCWLMFLANILWAVAY, LIIGILQIGVLALMAIIGELN, GLGWGYYWSIVVAGALFVYQQ, and AFMNNNYVGLVLFLGLAMSYW.

The protein belongs to the UbiA prenyltransferase family. It depends on Mg(2+) as a cofactor.

The protein localises to the cell inner membrane. It carries out the reaction all-trans-octaprenyl diphosphate + 4-hydroxybenzoate = 4-hydroxy-3-(all-trans-octaprenyl)benzoate + diphosphate. It participates in cofactor biosynthesis; ubiquinone biosynthesis. In terms of biological role, catalyzes the prenylation of para-hydroxybenzoate (PHB) with an all-trans polyprenyl group. Mediates the second step in the final reaction sequence of ubiquinone-8 (UQ-8) biosynthesis, which is the condensation of the polyisoprenoid side chain with PHB, generating the first membrane-bound Q intermediate 3-octaprenyl-4-hydroxybenzoate. In Shigella flexneri, this protein is 4-hydroxybenzoate octaprenyltransferase.